The primary structure comprises 404 residues: Argininosuccinate synthase (404 aa).

Residues 12–20 (AYSGGLDTS) and alanine 39 contribute to the ATP site. Positions 90 and 95 each coordinate L-citrulline. Glycine 120 is a binding site for ATP. 3 residues coordinate L-aspartate: threonine 122, asparagine 126, and aspartate 127. Asparagine 126 serves as a coordination point for L-citrulline. L-citrulline-binding residues include arginine 130, serine 181, serine 190, glutamate 266, and tyrosine 278.

The protein belongs to the argininosuccinate synthase family. Type 1 subfamily. As to quaternary structure, homotetramer.

Its subcellular location is the cytoplasm. It carries out the reaction L-citrulline + L-aspartate + ATP = 2-(N(omega)-L-arginino)succinate + AMP + diphosphate + H(+). It functions in the pathway amino-acid biosynthesis; L-arginine biosynthesis; L-arginine from L-ornithine and carbamoyl phosphate: step 2/3. The chain is Argininosuccinate synthase from Rhodospirillum rubrum (strain ATCC 11170 / ATH 1.1.1 / DSM 467 / LMG 4362 / NCIMB 8255 / S1).